A 133-amino-acid chain; its full sequence is ATP synthase epsilon chain, chloroplastic (133 aa).

This sequence belongs to the ATPase epsilon chain family. As to quaternary structure, F-type ATPases have 2 components, CF(1) - the catalytic core - and CF(0) - the membrane proton channel. CF(1) has five subunits: alpha(3), beta(3), gamma(1), delta(1), epsilon(1). CF(0) has three main subunits: a, b and c.

The protein resides in the plastid. It localises to the chloroplast thylakoid membrane. In terms of biological role, produces ATP from ADP in the presence of a proton gradient across the membrane. This is ATP synthase epsilon chain, chloroplastic from Trieres chinensis (Marine centric diatom).